We begin with the raw amino-acid sequence, 511 residues long: Probable lipid II flippase MurJ (511 aa).

The next 13 helical transmembrane spans lie at 31 to 51 (IFGAGMATDAFFVAFKLPNLL), 90 to 110 (LLTLALAVVTVAGMLAAPWVI), 130 to 150 (LLKITFPYILLISLASLVGAI), 159 to 179 (IPAFAPTLLNISMIGFALFAA), 182 to 202 (FNPPVLALAWAVTVGGVLQLV), 237 to 257 (ILGVSVSQISLIINTIFASFL), 271 to 291 (LMEFPSGVLGVALGTILLPSL), 314 to 334 (CFLLALPSAVALGILSGPLTV), 354 to 374 (LIAYSVGLIGLIVVKVLAPGF), 383 to 403 (PVKIAIVTLILTQLMNLAFIG), 407 to 427 (HAGLSLSIGLAACLNASLLYW), 443 to 463 (AFLLRLVVAVLVMSGVLLGML), and 481 to 501 (LMAVVLAGIAAYFAALAVLGF).

It belongs to the MurJ/MviN family.

The protein resides in the cell inner membrane. Its pathway is cell wall biogenesis; peptidoglycan biosynthesis. Involved in peptidoglycan biosynthesis. Transports lipid-linked peptidoglycan precursors from the inner to the outer leaflet of the cytoplasmic membrane. This Escherichia coli O157:H7 protein is Probable lipid II flippase MurJ.